A 93-amino-acid polypeptide reads, in one-letter code: Cell division topological specificity factor (93 aa).

This sequence belongs to the MinE family.

Its function is as follows. Prevents the cell division inhibition by proteins MinC and MinD at internal division sites while permitting inhibition at polar sites. This ensures cell division at the proper site by restricting the formation of a division septum at the midpoint of the long axis of the cell. In Agathobacter rectalis (strain ATCC 33656 / DSM 3377 / JCM 17463 / KCTC 5835 / VPI 0990) (Eubacterium rectale), this protein is Cell division topological specificity factor.